We begin with the raw amino-acid sequence, 144 residues long: Deoxyuridine 5'-triphosphate nucleotidohydrolase (144 aa).

Substrate-binding positions include 63–65 (RSG), asparagine 76, and 80–82 (TID).

It belongs to the dUTPase family. Mg(2+) serves as cofactor.

The enzyme catalyses dUTP + H2O = dUMP + diphosphate + H(+). The protein operates within pyrimidine metabolism; dUMP biosynthesis; dUMP from dCTP (dUTP route): step 2/2. In terms of biological role, this enzyme is involved in nucleotide metabolism: it produces dUMP, the immediate precursor of thymidine nucleotides and it decreases the intracellular concentration of dUTP so that uracil cannot be incorporated into DNA. This chain is Deoxyuridine 5'-triphosphate nucleotidohydrolase, found in Bacteroides thetaiotaomicron (strain ATCC 29148 / DSM 2079 / JCM 5827 / CCUG 10774 / NCTC 10582 / VPI-5482 / E50).